Here is a 421-residue protein sequence, read N- to C-terminus: MDKLIITGGVRLDGEIRISGAKNSALPILAATLLGDEPVTICNLPHLHDITTMIELFGRMGVEPVIDEKLSVEVDARSIKTLVAPYELVKTMRASILVLGPMVARFGEAEVALPGGCAIGSRPVDLHIRGLEAMGAQIDVEGGYIKAKAPEGGLRGAHFFFDVVSVTGTENIMMAATLAKGRSVLENAAREPEVVDLANCLIAMGAKIQGAGTDTIIIDGVERLHGARFNVMPDRIETGTYLVAAAVTGGRVKVKDADPSTLEAVLAKLQEAGAEITTGPDWIELDMKGKRPKAVNLRTAPYPAFPTDMQAQFIALNAVAEGTGTVIETVFENRFMHVYEMLRMGANILVEGNTAIVTGVEKLKGAPVMATDLRASASLVLAALMAEGDTLIDRIYHIDRGYECIEEKLQLLGAKIRRVPG.

22 to 23 (KN) is a binding site for phosphoenolpyruvate. R93 is a UDP-N-acetyl-alpha-D-glucosamine binding site. C117 (proton donor) is an active-site residue. 2-(S-cysteinyl)pyruvic acid O-phosphothioketal is present on C117. UDP-N-acetyl-alpha-D-glucosamine is bound by residues 122-126 (RPVDL), D308, and V330.

It belongs to the EPSP synthase family. MurA subfamily.

It is found in the cytoplasm. The catalysed reaction is phosphoenolpyruvate + UDP-N-acetyl-alpha-D-glucosamine = UDP-N-acetyl-3-O-(1-carboxyvinyl)-alpha-D-glucosamine + phosphate. The protein operates within cell wall biogenesis; peptidoglycan biosynthesis. Cell wall formation. Adds enolpyruvyl to UDP-N-acetylglucosamine. The sequence is that of UDP-N-acetylglucosamine 1-carboxyvinyltransferase from Ectopseudomonas mendocina (strain ymp) (Pseudomonas mendocina).